The following is a 329-amino-acid chain: Malate dehydrogenase (329 aa).

12–18 (GAAGQIG) contributes to the NAD(+) binding site. Residues R95 and R101 each contribute to the substrate site. Residues N108, Q115, and 132 to 134 (VGN) each bind NAD(+). Positions 134 and 165 each coordinate substrate. Residue H190 is the Proton acceptor of the active site.

This sequence belongs to the LDH/MDH superfamily. MDH type 2 family.

The enzyme catalyses (S)-malate + NAD(+) = oxaloacetate + NADH + H(+). Functionally, catalyzes the reversible oxidation of malate to oxaloacetate. This Polynucleobacter necessarius subsp. necessarius (strain STIR1) protein is Malate dehydrogenase.